We begin with the raw amino-acid sequence, 236 residues long: CO-responsive transcriptional regulator RcoM (236 aa).

One can recognise a PAS domain in the interval 1–64; it reads MDDFAYNLRR…PLRPKVAVLL (64 aa). A heme-binding site is contributed by His-52. The HTH LytTR-type domain maps to 131–236; sequence VPLGLGETTE…VTRLRGLLAI (106 aa).

Requires heme as cofactor.

Activates the expression of the CowN protein in response to carbon monoxide (CO). Is required to sustain N(2)-dependent growth in the presence of low levels of carbon monoxide (CO). In Rhodospirillum rubrum (strain ATCC 11170 / ATH 1.1.1 / DSM 467 / LMG 4362 / NCIMB 8255 / S1), this protein is CO-responsive transcriptional regulator RcoM (rcoM).